A 228-amino-acid polypeptide reads, in one-letter code: Cytochrome b-c1 complex subunit Rieske, mitochondrial (228 aa).

The N-terminal 26 residues, 1–26 (MLAKQFISKSLASSLRRLLPVSSTAS), are a transit peptide targeting the mitochondrion. Residues 27 to 63 (SLKGSMMTIPKFTSIRTYTDSPEMPDFSEYQTKSTGD) lie on the Mitochondrial matrix side of the membrane. The chain crosses the membrane as a helical span at residues 64-93 (RSRVISYAMVGTMGALTAAGAQATVHDFLA). Over 94–228 (SWSASADVLA…TFEGSKIIIG (135 aa)) the chain is Mitochondrial intermembrane. The Rieske domain maps to 139–227 (IQEANSVDIS…YTFEGSKIII (89 aa)). Residues C172, H174, C191, and H194 each contribute to the [2Fe-2S] cluster site. C177 and C193 are disulfide-bonded.

Belongs to the Rieske iron-sulfur protein family. As to quaternary structure, component of the ubiquinol-cytochrome c oxidoreductase (cytochrome b-c1 complex, complex III, CIII), a multisubunit enzyme composed of 3 respiratory subunits cytochrome b, cytochrome c1 and Rieske protein, 2 core protein subunits, and additional low-molecular weight protein subunits. The complex exists as an obligatory dimer and forms supercomplexes (SCs) in the inner mitochondrial membrane with cytochrome c oxidase (complex IV, CIV). [2Fe-2S] cluster is required as a cofactor.

It is found in the mitochondrion inner membrane. It catalyses the reaction a quinol + 2 Fe(III)-[cytochrome c](out) = a quinone + 2 Fe(II)-[cytochrome c](out) + 2 H(+)(out). Its function is as follows. Component of the ubiquinol-cytochrome c oxidoreductase, a multisubunit transmembrane complex that is part of the mitochondrial electron transport chain which drives oxidative phosphorylation. The respiratory chain contains 3 multisubunit complexes succinate dehydrogenase (complex II, CII), ubiquinol-cytochrome c oxidoreductase (cytochrome b-c1 complex, complex III, CIII) and cytochrome c oxidase (complex IV, CIV), that cooperate to transfer electrons derived from NADH and succinate to molecular oxygen, creating an electrochemical gradient over the inner membrane that drives transmembrane transport and the ATP synthase. The cytochrome b-c1 complex catalyzes electron transfer from ubiquinol to cytochrome c, linking this redox reaction to translocation of protons across the mitochondrial inner membrane, with protons being carried across the membrane as hydrogens on the quinol. In the process called Q cycle, 2 protons are consumed from the matrix, 4 protons are released into the intermembrane space and 2 electrons are passed to cytochrome c. The Rieske protein is a catalytic core subunit containing a [2Fe-2S] iron-sulfur cluster. It cycles between 2 conformational states during catalysis to transfer electrons from the quinol bound in the Q(0) site in cytochrome b to cytochrome c1. This is Cytochrome b-c1 complex subunit Rieske, mitochondrial (rip1) from Schizosaccharomyces pombe (strain 972 / ATCC 24843) (Fission yeast).